The sequence spans 283 residues: MTKVIQTVSEMQQITQELKSTGKTIGFVPTMGALHEGHLSMMRRSVEENDITVISVFVNPLQFGPNEDFDAYPRQIDQDVALVEAINVDYVFHPAVEEMYPNELSVTLKVGRLAEVLEGAQRPGHFDGVVTVLNKLFNIVSPNKAYFGKKDAQQLAIVEKMVEDFNHPIQIVGIDIVREEDGLARSSRNVYLTDDERQEAVHLSKSLEIAQTLYKQGERRSHIIVGEIKTYLSEHTSGHIDEVAIYSYPDLEVATEIQGQIFISLAVKFSKARLIDNIILGSE.

31 to 38 (MGALHEGH) contacts ATP. The Proton donor role is filled by histidine 38. (R)-pantoate is bound at residue glutamine 62. Glutamine 62 lines the beta-alanine pocket. ATP is bound at residue 148–151 (GKKD). Residue glutamine 154 coordinates (R)-pantoate. ATP is bound by residues valine 177 and 185 to 188 (RSSR).

This sequence belongs to the pantothenate synthetase family. As to quaternary structure, homodimer.

It is found in the cytoplasm. It carries out the reaction (R)-pantoate + beta-alanine + ATP = (R)-pantothenate + AMP + diphosphate + H(+). Its pathway is cofactor biosynthesis; (R)-pantothenate biosynthesis; (R)-pantothenate from (R)-pantoate and beta-alanine: step 1/1. Its function is as follows. Catalyzes the condensation of pantoate with beta-alanine in an ATP-dependent reaction via a pantoyl-adenylate intermediate. In Staphylococcus haemolyticus (strain JCSC1435), this protein is Pantothenate synthetase.